Here is a 104-residue protein sequence, read N- to C-terminus: Zinc-containing ferredoxin-2 (104 aa).

The interval 2–37 is N-terminal extension; that stretch reads GIDPNYRQNRQVVGEHEGHKIYGPVEPPGKLGIHGT. Residues His17, His20, and His35 each coordinate Zn(2+). 4Fe-4S ferredoxin-type domains lie at 38-66 and 75-104; these read IVGVDFDVCIADGSCINACPVNVFQWFDT and KADPINEKACIFCMACVNVCPVAAIDVKPP. Positions 46 and 52 each coordinate [3Fe-4S] cluster. Residue Cys56 participates in [4Fe-4S] cluster binding. Asp77 is a Zn(2+) binding site. [4Fe-4S] cluster-binding residues include Cys84, Cys87, and Cys90. Residue Cys94 coordinates [3Fe-4S] cluster.

It depends on [3Fe-4S] cluster as a cofactor. Requires [4Fe-4S] cluster as cofactor. Zn(2+) is required as a cofactor.

In terms of biological role, ferredoxins are iron-sulfur proteins that transfer electrons in a wide variety of metabolic reactions. The polypeptide is Zinc-containing ferredoxin-2 (zfx2) (Sulfurisphaera tokodaii (strain DSM 16993 / JCM 10545 / NBRC 100140 / 7) (Sulfolobus tokodaii)).